The sequence spans 615 residues: AP-1-like transcription factor yap1 (615 aa).

The segment covering 27–50 (SSNNPTQKQQTVTHNSEANQNLNH) has biased composition (polar residues). Disordered stretches follow at residues 27–84 (SSNN…EDSP) and 99–180 (NESL…RKEK). A Bipartite nuclear localization signal motif is present at residues 35–42 (QQTVTHNS). The span at 52–67 (PGHASSGSFSVSPPSG) shows a compositional bias: low complexity. The Bipartite nuclear localization signal signature appears at 68–75 (LDGSVNQS). Positions 118 to 147 (PGDKRKDIDGQVNDKEDSGKKRRESDEKAA) are enriched in basic and acidic residues. The region spanning 157–220 (SEPTSKRKAQ…ERLQLELKEY (64 aa)) is the bZIP domain. The segment at 162-183 (KRKAQNRAAQRAFRERKEKHLK) is basic motif. The segment at 185-192 (LEAKVEEL) is leucine-zipper. Positions 214 to 364 (QLELKEYRKR…RGYQVNSSYS (151 aa)) are transcription activation 1. Positions 270–294 (LFTNTQTSKSNQNKAKDNPTATPRS) are enriched in polar residues. The segment at 270 to 416 (LFTNTQTSKS…AVKATESSTP (147 aa)) is disordered. Residues 289-301 (TATPRSEAQVPGV) are n-CRD. Residues 310-321 (SSPNGLSNGPSP) are compositionally biased toward low complexity. Polar residues-rich tracts occupy residues 322–344 (AKST…SGTL) and 358–369 (QVNSSYSASTKQ). Residues 372-394 (HDTPSSDSPSSSSDSHQSQLLSS) show a composition bias toward low complexity. The interval 409–508 (KATESSTPHA…SQDFGTFFDD (100 aa)) is transcription activation 2. Intrachain disulfides connect cysteine 562/cysteine 586, cysteine 562/cysteine 595, and cysteine 586/cysteine 595. The c-CRD stretch occupies residues 562–595 (CNKIWDRLQSMEKFRNGEIDVDNLCSELRTKARC). A Nuclear export signal motif is present at residues 580–587 (IDVDNLCS).

This sequence belongs to the bZIP family. YAP subfamily. In terms of processing, depending on the oxidative stress inducing agent, yap1 can undergo two distinct conformational changes, both involving disulfide bond formation, and both masking the nuclear export signal, thus abolishing nuclear export.

Its subcellular location is the nucleus. It is found in the cytoplasm. Transcription activator involved in oxidative stress response and redox homeostasis. Regulates the transcription of genes encoding antioxidant enzymes and components of the cellular thiol-reducing pathways, including thioredoxin peroxidase (aspF3), cytochrome peroxidase, and the protein AFUA_3G00730, which appears to belong to the glutathione S-transferase family. Proteins of the protein degradation pathway are also regulated by yap1, as well the p-nitroreductase family protein AFUA_5G09910. May be involved in antifungal resistance to voriconazole. This Aspergillus fumigatus (strain ATCC MYA-4609 / CBS 101355 / FGSC A1100 / Af293) (Neosartorya fumigata) protein is AP-1-like transcription factor yap1.